The following is a 98-amino-acid chain: Large ribosomal subunit protein eL21 (98 aa).

Over residues methionine 1–glycine 24 the composition is skewed to basic residues. The segment at methionine 1–proline 27 is disordered.

The protein belongs to the eukaryotic ribosomal protein eL21 family. In terms of assembly, part of the 50S ribosomal subunit.

The polypeptide is Large ribosomal subunit protein eL21 (Thermococcus kodakarensis (strain ATCC BAA-918 / JCM 12380 / KOD1) (Pyrococcus kodakaraensis (strain KOD1))).